The primary structure comprises 94 residues: UPF0235 protein Dred_0717 (94 aa).

This sequence belongs to the UPF0235 family.

This chain is UPF0235 protein Dred_0717, found in Desulforamulus reducens (strain ATCC BAA-1160 / DSM 100696 / MI-1) (Desulfotomaculum reducens).